The sequence spans 143 residues: Transcriptional regulator SlyA (143 aa).

The region spanning 2–135 is the HTH marR-type domain; the sequence is ESTLGSDLAR…LSTLVQKLEQ (134 aa). The segment at residues 49–72 is a DNA-binding region (H-T-H motif); sequence QIQLAKAIGIEQPSLVRTLDQLEE.

The protein belongs to the SlyA family. In terms of assembly, homodimer.

Transcription regulator that can specifically activate or repress expression of target genes. Regulates the cpm operon, which contains cpmA, cpmB, cpmC, cpmD, cpmE, cpmF, cpmG and cpmH, involved in carbapenem-like antibiotic production. The polypeptide is Transcriptional regulator SlyA (Photorhabdus laumondii subsp. laumondii (strain DSM 15139 / CIP 105565 / TT01) (Photorhabdus luminescens subsp. laumondii)).